A 272-amino-acid chain; its full sequence is CD40 ligand (272 aa).

Residues 1-23 (MNEAYSPAAPRPMGSTSPSTMKM) lie on the Cytoplasmic side of the membrane. The chain crosses the membrane as a helical; Signal-anchor for type II membrane protein span at residues 24-44 (FMCFLSVFMVVQTIGTVLFCL). Residues 45-272 (YLHMKMDKME…GNTYFGMFKL (228 aa)) are Extracellular-facing. Asn124 and Asn146 each carry an N-linked (GlcNAc...) asparagine glycan. One can recognise a THD domain in the interval 136–272 (IATHLAGVKS…GNTYFGMFKL (137 aa)). A disulfide bridge links Cys190 with Cys229. The N-linked (GlcNAc...) asparagine glycan is linked to Asn251.

The protein belongs to the tumor necrosis factor family. As to quaternary structure, homotrimer. Interacts with CD28. CD40 ligand, soluble form: Exists as either a monomer or a homotrimer. Forms a ternary complex between CD40 and integrins for CD40-CD40LG signaling. The soluble form derives from the membrane form by proteolytic processing.

It is found in the cell membrane. Its subcellular location is the cell surface. It localises to the secreted. Cytokine that acts as a ligand to CD40/TNFRSF5. Costimulates T-cell proliferation and cytokine production. Induces the activation of NF-kappa-B. Mediates B-cell proliferation in the absence of co-stimulus as well as IgE production in the presence of IL4. Involved in immunoglobulin class switching. Its function is as follows. Acts as a ligand for integrins, specifically ITGA5:ITGB1 and ITGAV:ITGB3; both integrins and the CD40 receptor are required for activation of CD40-CD40LG signaling, which have cell-type dependent effects, such as B-cell activation, NF-kappa-B signaling and anti-apoptotic signaling. This is CD40 ligand (CD40LG) from Gallus gallus (Chicken).